A 93-amino-acid chain; its full sequence is Small ribosomal subunit protein uS19 (93 aa).

The protein belongs to the universal ribosomal protein uS19 family.

Functionally, protein S19 forms a complex with S13 that binds strongly to the 16S ribosomal RNA. The sequence is that of Small ribosomal subunit protein uS19 from Campylobacter fetus subsp. fetus (strain 82-40).